A 73-amino-acid chain; its full sequence is uncharacterized protein (73 aa).

This is an uncharacterized protein from Vaccinia virus (strain Copenhagen) (VACV).